We begin with the raw amino-acid sequence, 663 residues long: Polyunsaturated fatty acid lipoxygenase ALOX15 (663 aa).

In terms of domain architecture, PLAT spans 2–115; that stretch reads GVYRVCVSTG…VQSLPVGTGC (114 aa). The Lipoxygenase domain occupies 116 to 663; the sequence is TTVGDPQGLF…PSIVENSVAI (548 aa). Residues His-361, His-366, His-541, His-545, and Ile-663 each contribute to the Fe cation site.

This sequence belongs to the lipoxygenase family. In terms of assembly, interacts with PEBP1; in response to IL13/interleukin-13, prevents the interaction of PEBP1 with RAF1 to activate the ERK signaling cascade. Requires Fe cation as cofactor. Detected in reticulocytes (at protein level).

It is found in the cytoplasm. Its subcellular location is the cytosol. The protein resides in the cell membrane. The protein localises to the lipid droplet. The catalysed reaction is (5Z,8Z,11Z,14Z)-eicosatetraenoate + O2 = (12S)-hydroperoxy-(5Z,8Z,10E,14Z)-eicosatetraenoate. The enzyme catalyses (5Z,8Z,11Z,14Z)-eicosatetraenoate + O2 = (15S)-hydroperoxy-(5Z,8Z,11Z,13E)-eicosatetraenoate. It carries out the reaction (9Z,12Z)-octadecadienoate + O2 = (13S)-hydroperoxy-(9Z,11E)-octadecadienoate. It catalyses the reaction (5Z,8Z,11Z,14Z)-eicosatetraenoate + 2 O2 = (14R,15S)-dihydroperoxy-(5Z,8Z,10E,12E)-eicosatetraenoate. The catalysed reaction is (5Z,8Z,11Z,14Z)-eicosatetraenoate + 2 O2 = (8S,15S)-dihydroperoxy-(5Z,9E,11Z,13E)-eicosatetraenoate. The enzyme catalyses (14S,15R)-epoxy-(5Z,8Z,11Z)-eicosatrienoate + O2 = (8S)-hydroperoxy-(14S,15R)-epoxy-(5Z,9E,11Z)-eicosatrienoate. It carries out the reaction (14S,15R)-epoxy-(5Z,8Z,11Z)-eicosatrienoate + O2 = (12S)-hydroperoxy-(14S,15R)-epoxy-(5Z,8Z,10E)-eicosatrienoate. It catalyses the reaction (14R,15S)-epoxy-(5Z,8Z,11Z)-eicosatrienoate + O2 = (5S)-hydroperoxy-(14R,15S)-epoxy-(6E,8Z,11Z)-eicosatrienoate. The catalysed reaction is (14R,15S)-epoxy-(5Z,8Z,11Z)-eicosatrienoate + O2 = (12S)-hydroperoxy-(14R,15S)-epoxy-(5Z,8Z,10E)-eicosatrienoate. The enzyme catalyses (15R)-hydroperoxy-(5Z,8Z,11Z,13E)-eicosatetraenoate = 15-oxo-(5Z,8Z,11Z,13E)-eicosatetraenoate + H2O. It carries out the reaction (15S)-hydroperoxy-(5Z,8Z,11Z,13E)-eicosatetraenoate = (14S,15S)-epoxy-(5Z,8Z,10E,12E)-eicosatetraenoate + H2O. It catalyses the reaction (12S)-hydroperoxy-(5Z,8Z,10E,14Z)-eicosatetraenoate = (8S)-hydroxy-(11S,12S)-epoxy-(5Z,9E,14Z)-eicosatrienoate. The catalysed reaction is (4Z,7Z,10Z,13Z,16Z)-docosapentaenoate + O2 = 14-hydroperoxy-(4Z,7Z,10Z,12E,16Z)-docosapentaenoate. The enzyme catalyses (7Z,10Z,13Z,16Z,19Z)-docosapentaenoate + O2 = 14-hydroperoxy-(7Z,10Z,12E,16Z,19Z)-docosapentaenoate. It carries out the reaction (4Z,7Z,10Z,13Z,16Z,19Z)-docosahexaenoate + O2 = (14S)-hydroperoxy-(4Z,7Z,10Z,12E,16Z,19Z)-docosahexaenoate. It catalyses the reaction (4Z,7Z,10Z,13Z,16Z,19Z)-docosahexaenoate + O2 = (17S)-hydroperoxy-(4Z,7Z,10Z,13Z,15E,19Z)-docosahexaenoate. The catalysed reaction is (7S)-hydroperoxy-(4Z,8E,10Z,13Z,16Z,19Z)-docosahexaenoate + O2 = (7S,14S)-dihydroperoxy-(4Z,8E,10Z,12E,16Z,19Z)-docosahexaenoate. The enzyme catalyses (7S)-hydroperoxy-(4Z,8E,10Z,13Z,16Z,19Z)-docosahexaenoate + O2 = (7S,17S)-dihydroperoxy-(4Z,8E,10Z,13Z,15E,19Z)-docosahexaenoate. It carries out the reaction (4Z,7Z,10Z,13Z,16Z,19Z)-docosahexaenoate + O2 = (11S)-hydroperoxy-(4Z,7Z,9E,13Z,16Z,19Z)-docosahexaenoate. It catalyses the reaction N-(5Z,8Z,11Z,14Z)-eicosatetraenoyl-taurine + O2 = N-(15S)-hydroperoxy-(5Z,8Z,11Z,13E)-eicosatetraenoyl-taurine. The catalysed reaction is N-(5Z,8Z,11Z,14Z)-eicosatetraenoyl-gamma-aminobutanoate + O2 = N-(15S)-hydroperoxy-(5Z,8Z,11Z,13E)-eicosatetraenoyl-gamma-aminobutanoate. The enzyme catalyses N-(5Z,8Z,11Z,14Z)-eicosatetraenoyl-glycine + O2 = N-(15S)-hydroperoxy-(5Z,8Z,11Z,13E)-eicosatetraenoyl-glycine. It carries out the reaction N-(5Z,8Z,11Z,14Z)-eicosatetraenoyl-L-alanine + O2 = N-(15S)-hydroperoxy-(5Z,8Z,11Z,13E)-eicosatetraenoyl-alanine. It catalyses the reaction N-(5Z,8Z,11Z,14Z)-eicosatetraenoyl-taurine + O2 = N-(12S)-hydroperoxy-(5Z,8Z,10E,14Z)-eicosatetraenoyl-taurine. The catalysed reaction is N-(5Z,8Z,11Z,14Z)-eicosatetraenoyl-gamma-aminobutanoate + O2 = N-(12S)-hydroperoxy-(5Z,8Z,10E,14Z)-eicosatetraenoyl-gamma-aminobutanoate. The enzyme catalyses N-(5Z,8Z,11Z,14Z)-eicosatetraenoyl-glycine + O2 = N-(12S)-hydroperoxy-(5Z,8Z,10E,14Z)-eicosatetraenoyl-glycine. It carries out the reaction N-(5Z,8Z,11Z,14Z)-eicosatetraenoyl-L-alanine + O2 = N-(12S)-hydroperoxy-(5Z,8Z,10E,14Z)-eicosatetraenoyl-alanine. Its pathway is lipid metabolism; hydroperoxy eicosatetraenoic acid biosynthesis. Functionally, non-heme iron-containing dioxygenase that catalyzes the stereo-specific peroxidation of free and esterified polyunsaturated fatty acids generating a spectrum of bioactive lipid mediators. It inserts peroxyl groups at C12 or C15 of arachidonate ((5Z,8Z,11Z,14Z)-eicosatetraenoate) producing both 12-hydroperoxyeicosatetraenoate/12-HPETE and 15-hydroperoxyeicosatetraenoate/15-HPETE. It may then act on 12-HPETE to produce hepoxilins, which may show pro-inflammatory properties. Can also peroxidize linoleate ((9Z,12Z)-octadecadienoate) to 13-hydroperoxyoctadecadienoate. May participate in the sequential oxidations of DHA ((4Z,7Z,10Z,13Z,16Z,19Z)-docosahexaenoate) to generate specialized pro-resolving mediators (SPMs)like resolvin D5 ((7S,17S)-diHPDHA) and (7S,14S)-diHPDHA, that actively down-regulate the immune response and have anti-aggregation properties with platelets. Can convert epoxy fatty acids to hydroperoxy-epoxides derivatives followed by an intramolecular nucleophilic substitution leading to the formation of monocyclic endoperoxides. Plays an important role during the maintenance of self-tolerance by peroxidizing membrane-bound phosphatidylethanolamine which can then signal the sorting process for clearance of apoptotic cells during inflammation and prevent an autoimmune response. In addition to its role in the immune and inflammatory responses, this enzyme may play a role in epithelial wound healing in the cornea through production of lipoxin A4 (LXA(4)) and docosahexaenoic acid-derived neuroprotectin D1 (NPD1; 10R,17S-HDHA), both lipid autacoids exhibit anti-inflammatory and neuroprotective properties. Furthermore, it may regulate actin polymerization which is crucial for several biological processes such as the phagocytosis of apoptotic cells. It is also implicated in the generation of endogenous ligands for peroxisome proliferator activated receptor (PPAR-gamma), hence modulating macrophage development and function. It may also exert a negative effect on skeletal development by regulating bone mass through this pathway. As well as participates in ER stress and downstream inflammation in adipocytes, pancreatic islets, and liver. Finally, it is also involved in the cellular response to IL13/interleukin-13. The protein is Polyunsaturated fatty acid lipoxygenase ALOX15 of Oryctolagus cuniculus (Rabbit).